A 140-amino-acid chain; its full sequence is Protein ApaG (140 aa).

In terms of domain architecture, ApaG spans 13-137 (EARTRDIVVR…FSLHLPGAAM (125 aa)).

This Caulobacter vibrioides (strain ATCC 19089 / CIP 103742 / CB 15) (Caulobacter crescentus) protein is Protein ApaG.